The primary structure comprises 334 residues: Nucleoid-associated protein YPN_2714 (334 aa).

This sequence belongs to the YejK family.

It localises to the cytoplasm. Its subcellular location is the nucleoid. The polypeptide is Nucleoid-associated protein YPN_2714 (Yersinia pestis bv. Antiqua (strain Nepal516)).